The following is a 179-amino-acid chain: MGSEAAQLLEAADFAAHKHRQQRRKDPEGTPYINHPIGVARILTHEAGITDIVVLQAALLHDTVEDTDTTLDEVELHFGAQVRRLVEEVTDDKTLPKLERKRQQVEQAPHSSPGAKLVKLADKLYNLRDLNRCTPTGWSEHRVQEYFEWAAQVVKGLQGTNQQLEEALKQLFEERGLTL.

N-acetylglycine is present on glycine 2. Lysine 25 carries the post-translational modification N6-acetyllysine. One can recognise an HD domain in the interval 32–127 (YINHPIGVAR…VKLADKLYNL (96 aa)). Residues histidine 35, histidine 61, and aspartate 62 each coordinate Mn(2+). Residues glutamate 65 and aspartate 66 each act as nucleophile in the active site. An N6-acetyllysine modification is found at lysine 97. A Mn(2+)-binding site is contributed by aspartate 122. Lysine 123 is subject to N6-acetyllysine.

Belongs to the MESH1 family. Mn(2+) serves as cofactor.

It carries out the reaction guanosine 3',5'-bis(diphosphate) + H2O = GDP + diphosphate + H(+). PpGpp hydrolyzing enzyme involved in starvation response. This is Guanosine-3',5'-bis(diphosphate) 3'-pyrophosphohydrolase MESH1 (Hddc3) from Mus musculus (Mouse).